Here is a 320-residue protein sequence, read N- to C-terminus: Cytochrome f (320 aa).

Positions 1 to 35 (MQNRNTFSWVKEQMTRFISVSIMIYVITRTSISNA) are cleaved as a signal peptide. Heme is bound by residues Tyr36, Cys56, Cys59, and His60. A helical transmembrane segment spans residues 286–306 (VQGLLFFLASVILAQIFLVLK).

The protein belongs to the cytochrome f family. In terms of assembly, the 4 large subunits of the cytochrome b6-f complex are cytochrome b6, subunit IV (17 kDa polypeptide, petD), cytochrome f and the Rieske protein, while the 4 small subunits are PetG, PetL, PetM and PetN. The complex functions as a dimer. Requires heme as cofactor.

Its subcellular location is the plastid. It is found in the chloroplast thylakoid membrane. Its function is as follows. Component of the cytochrome b6-f complex, which mediates electron transfer between photosystem II (PSII) and photosystem I (PSI), cyclic electron flow around PSI, and state transitions. This is Cytochrome f from Liriodendron tulipifera (Tuliptree).